Here is a 125-residue protein sequence, read N- to C-terminus: Ribosome-binding factor A (125 aa).

This sequence belongs to the RbfA family. Monomer. Binds 30S ribosomal subunits, but not 50S ribosomal subunits or 70S ribosomes.

It localises to the cytoplasm. Functionally, one of several proteins that assist in the late maturation steps of the functional core of the 30S ribosomal subunit. Associates with free 30S ribosomal subunits (but not with 30S subunits that are part of 70S ribosomes or polysomes). Required for efficient processing of 16S rRNA. May interact with the 5'-terminal helix region of 16S rRNA. The sequence is that of Ribosome-binding factor A from Paracidovorax citrulli (strain AAC00-1) (Acidovorax citrulli).